The sequence spans 452 residues: Activating transcription factor 7-interacting protein 2 (452 aa).

Serine 184 carries the phosphoserine modification. Residues 185 to 206 (RSKRISSVNHTPLNSSEKAGRK) are disordered. Serine 257 is subject to Phosphoserine. The Fibronectin type-III domain occupies 346–450 (PPQKPELKVK…IKSIPRFSEN (105 aa)).

The protein belongs to the MCAF family. As to quaternary structure, interacts with MBD1, SETDB1 and SP1. Probably forms a complex with SETDB1 and MBD1. Expressed in testis.

It localises to the nucleus. Functionally, recruiter that couples transcriptional factors to general transcription apparatus and thereby modulates transcription regulation and chromatin formation. Can both act as an activator or a repressor depending on the context. Mediates MBD1-dependent transcriptional repression, probably by recruiting complexes containing SETDB1. The complex formed with MBD1 and SETDB1 represses transcription and probably couples DNA methylation and histone H3 'Lys-9' trimethylation (H3K9me3) activity. This chain is Activating transcription factor 7-interacting protein 2 (Atf7ip2), found in Mus musculus (Mouse).